The following is an 80-amino-acid chain: Large ribosomal subunit protein eL14 (80 aa).

It belongs to the eukaryotic ribosomal protein eL14 family.

This Methanocaldococcus jannaschii (strain ATCC 43067 / DSM 2661 / JAL-1 / JCM 10045 / NBRC 100440) (Methanococcus jannaschii) protein is Large ribosomal subunit protein eL14.